We begin with the raw amino-acid sequence, 72 residues long: Movement protein TGBp3 (72 aa).

At 1–2 the chain is on the lumenal side; it reads MS. A helical transmembrane segment spans residues 3-23; sequence LSFSLIVFAVGVAVSIGVLTL. The Cytoplasmic segment spans residues 24–72; sequence TTQQSSSYCLILVDGAKAVVEGCHLRQDIPAILSELKPASSPFNPLFCS.

It belongs to the Tymovirales TGBp3 protein family.

Its subcellular location is the host endoplasmic reticulum membrane. Its function is as follows. Plays a role in viral cell-to-cell propagation, by facilitating genome transport to neighboring plant cells through plasmosdesmata. May induce the formation of granular vesicles derived from the Endoplasmic reticulum, which align on actin filaments. This Lolium latent virus (isolate Lolium/USA/US1/-) (LoLV) protein is Movement protein TGBp3 (ORF4).